A 274-amino-acid polypeptide reads, in one-letter code: Tryptase beta-2 (274 aa).

Positions 1 to 19 are cleaved as a signal peptide; that stretch reads MLKLLLLLALSPLASLVHA. The propeptide at 20 to 29 is activation peptide; that stretch reads APCPVKQRVG. One can recognise a Peptidase S1 domain in the interval 30–271; that stretch reads IVGGREASES…YLDWIHRYVP (242 aa). Cysteine 58 and cysteine 74 are oxidised to a cystine. Histidine 73 (charge relay system) is an active-site residue. The residue at position 96 (tyrosine 96) is a Phosphotyrosine. N-linked (GlcNAc...) asparagine glycosylation is present at asparagine 104. The active-site Charge relay system is the aspartate 120. N-linked (GlcNAc...) asparagine glycosylation occurs at asparagine 131. Intrachain disulfides connect cysteine 154-cysteine 229, cysteine 187-cysteine 210, and cysteine 219-cysteine 247. Serine 223 acts as the Charge relay system in catalysis.

It belongs to the peptidase S1 family. Tryptase subfamily. As to quaternary structure, homotetramer. The active tetramer is converted to inactive monomers at neutral and acidic pH in the absence of heparin. Low concentrations of inactive monomers become active monomers at pH 6.0 in the presence of heparin. When the concentration of active monomers is higher, they convert to active monomers and then to active tetramers. These monomers are active and functionally distinct from the tetrameric enzyme. In contrast to the hidden active sites in the tetrameric form, the active site of the monomeric form is accessible for macromolecular proteins and inhibitors, e.g. fibrinogen which is a substrate for the monomeric but not for the tetrameric form. The monomeric form forms a complex with SERPINB6.

The protein resides in the secreted. It catalyses the reaction Preferential cleavage: Arg-|-Xaa, Lys-|-Xaa, but with more restricted specificity than trypsin.. Functionally, tryptase is the major neutral protease present in mast cells and is secreted upon the coupled activation-degranulation response of this cell type. Plays a role in innate immunity. This is Tryptase beta-2 (Tpsb2) from Rattus norvegicus (Rat).